The following is a 161-amino-acid chain: Cyclic pyranopterin monophosphate synthase (161 aa).

Residues 75 to 77 (MCH) and 115 to 116 (ME) each bind substrate. Aspartate 130 is a catalytic residue.

The protein belongs to the MoaC family. Homohexamer; trimer of dimers.

The catalysed reaction is (8S)-3',8-cyclo-7,8-dihydroguanosine 5'-triphosphate = cyclic pyranopterin phosphate + diphosphate. It functions in the pathway cofactor biosynthesis; molybdopterin biosynthesis. In terms of biological role, catalyzes the conversion of (8S)-3',8-cyclo-7,8-dihydroguanosine 5'-triphosphate to cyclic pyranopterin monophosphate (cPMP). The chain is Cyclic pyranopterin monophosphate synthase from Bacillus mycoides (strain KBAB4) (Bacillus weihenstephanensis).